The primary structure comprises 417 residues: MLKREMNIADYDADLWRAMEQEVVRQEEHIELIASENYTSPRVMQAQGSQLTNKYAEGYPGKRYYGGCEYVDVVEQLAIDRAKALFGADYANVQPHSGSQANVAVYSALLKPGDTVLGMNLAHGGHLTHGSPVNFSGKLYNIVPYGIDESGQIDYEDLARQAEIHKPKMIIGGFSAYSGIVDWAKMREIADSIDAWFFVDMAHVAGLVAAGVYPNPVPHAHIVTTTTHKTLAGPRGGLILAKGGDEDLYKKLNSSVFPGNQGGPLMHVIAGKAVALKEAMEPEFKIYQQQVAKNAKAMVAVFLERGYKVVSGGTDNHLFLLDLVDKDITGKDADAALGRANITVNKNSVPNDPKSPFVTSGVRIGSPAITRRGFKEAESRELAGWMCDVLDNINDEATIERVKQKVLAICARLPVYA.

Residues leucine 121 and 125-127 (GHL) each bind (6S)-5,6,7,8-tetrahydrofolate. N6-(pyridoxal phosphate)lysine is present on lysine 229. Position 355–357 (355–357 (SPF)) interacts with (6S)-5,6,7,8-tetrahydrofolate.

It belongs to the SHMT family. As to quaternary structure, homodimer. It depends on pyridoxal 5'-phosphate as a cofactor.

The protein resides in the cytoplasm. It catalyses the reaction (6R)-5,10-methylene-5,6,7,8-tetrahydrofolate + glycine + H2O = (6S)-5,6,7,8-tetrahydrofolate + L-serine. It functions in the pathway one-carbon metabolism; tetrahydrofolate interconversion. The protein operates within amino-acid biosynthesis; glycine biosynthesis; glycine from L-serine: step 1/1. Catalyzes the reversible interconversion of serine and glycine with tetrahydrofolate (THF) serving as the one-carbon carrier. This reaction serves as the major source of one-carbon groups required for the biosynthesis of purines, thymidylate, methionine, and other important biomolecules. Also exhibits THF-independent aldolase activity toward beta-hydroxyamino acids, producing glycine and aldehydes, via a retro-aldol mechanism. The protein is Serine hydroxymethyltransferase of Yersinia pestis bv. Antiqua (strain Antiqua).